We begin with the raw amino-acid sequence, 443 residues long: Ribosomal protein uS12 methylthiotransferase RimO (443 aa).

Residues 5–115 enclose the MTTase N-terminal domain; the sequence is PNIGFISLGC…VMKHVHKYVP (111 aa). The [4Fe-4S] cluster site is built by cysteine 14, cysteine 50, cysteine 79, cysteine 147, cysteine 151, and cysteine 154. A Radical SAM core domain is found at 133-374; sequence LTPKHYAYLK…MQVQQRISAA (242 aa). Positions 377–443 constitute a TRAM domain; sequence QQKVGKTLAV…ADEYDLWGTC (67 aa).

It belongs to the methylthiotransferase family. RimO subfamily. [4Fe-4S] cluster is required as a cofactor.

Its subcellular location is the cytoplasm. The enzyme catalyses L-aspartate(89)-[ribosomal protein uS12]-hydrogen + (sulfur carrier)-SH + AH2 + 2 S-adenosyl-L-methionine = 3-methylsulfanyl-L-aspartate(89)-[ribosomal protein uS12]-hydrogen + (sulfur carrier)-H + 5'-deoxyadenosine + L-methionine + A + S-adenosyl-L-homocysteine + 2 H(+). Its function is as follows. Catalyzes the methylthiolation of an aspartic acid residue of ribosomal protein uS12. In Actinobacillus pleuropneumoniae serotype 7 (strain AP76), this protein is Ribosomal protein uS12 methylthiotransferase RimO.